Here is a 661-residue protein sequence, read N- to C-terminus: Ecdysteroid-phosphate phosphatase (661 aa).

The UBA domain occupies 16 to 57 (KQDVSPLQILLQMGFRRQRALKALAATGNRSVQLASDWLLTH). The SH3 domain maps to 235–300 (ANHQVYKVTQ…PAVYTRRTAE (66 aa)). Arg409 is an active-site residue. The Tele-phosphohistidine intermediate role is filled by His410. The active site involves His590.

In terms of assembly, homodimer. In terms of tissue distribution, detected in non-diapause eggs, with highest expression between 2 and 5 days after oviposition. Not detected in other tissues tested.

It localises to the cytoplasm. The protein localises to the cytosol. It catalyses the reaction ecdysone 22-phosphate + H2O = ecdysone + phosphate. The enzyme catalyses 20-hydroxyecdysone 22-phosphate + H2O = 20-hydroxyecdysone + phosphate. The catalysed reaction is 2-deoxyecdysone 22-phosphate + H2O = 2-deoxyecdysone + phosphate. It carries out the reaction O-phospho-L-tyrosyl-[protein] + H2O = L-tyrosyl-[protein] + phosphate. Competitively inhibited by 4-nitrophenyl phosphate (para-nitrophenylphosphate, pNPP). Also inhibited by tungstate, vanadate, and phosphate. Its function is as follows. Steroid phosphatase which catalyzes the conversion of inactive phosphorylated ecdysteroids into their active forms. Shows high activity towards ecdysone 22-phosphate (E22P). Has lower activity towards other ecdysteriod phosphates including 20-hydroxyecdysone 22-phosphate (20E22P) and 2-deoxyecdysone 22-phosphate (2dE22P). Also has protein tyrosine phosphatase activity. The protein is Ecdysteroid-phosphate phosphatase of Bombyx mori (Silk moth).